A 329-amino-acid polypeptide reads, in one-letter code: BRISC and BRCA1-A complex member 1 (329 aa).

M1 is modified (N-acetylmethionine). Positions 1–84 are disordered; the sequence is MEVAEPSSPT…VPPPAPEVQI (84 aa). S8 carries the phosphoserine modification. A compositionally biased stretch (acidic residues) spans 10–19; that stretch reads TEEEEEEEEH. A phosphoserine mark is found at S29, S49, S57, and S62. Residue T65 is modified to Phosphothreonine. At S66 the chain carries Phosphoserine. A VWFA-like region spans residues 95–298; that stretch reads VIICLDLSEE…LELHNCMAKL (204 aa).

The protein belongs to the BABAM1 family. In terms of assembly, component of the ARISC complex, at least composed of UIMC1/RAP80, ABRAXAS1, BRCC3/BRCC36, BABAM2 and BABAM1/NBA1. Component of the BRCA1-A complex, at least composed of BRCA1, BARD1, UIMC1/RAP80, ABRAXAS1, BRCC3/BRCC36, BABAM2 and BABAM1/NBA1. In the BRCA1-A complex, interacts directly with ABRAXAS1 and BABAM2. Component of the BRISC complex, at least composed of ABRAXAS2, BRCC3/BRCC36, BABAM2 and BABAM1/NBA1. Identified in a complex with SHMT2 and the other subunits of the BRISC complex.

It is found in the cytoplasm. The protein localises to the nucleus. In terms of biological role, component of the BRCA1-A complex, a complex that specifically recognizes 'Lys-63'-linked ubiquitinated histones H2A and H2AX at DNA lesions sites, leading to target the BRCA1-BARD1 heterodimer to sites of DNA damage at double-strand breaks (DSBs). The BRCA1-A complex also possesses deubiquitinase activity that specifically removes 'Lys-63'-linked ubiquitin on histones H2A and H2AX. In the BRCA1-A complex, it is required for the complex integrity and its localization at DSBs. Component of the BRISC complex, a multiprotein complex that specifically cleaves 'Lys-63'-linked ubiquitin in various substrates. In these 2 complexes, it is probably required to maintain the stability of BABAM2 and help the 'Lys-63'-linked deubiquitinase activity mediated by BRCC3/BRCC36 component. The BRISC complex is required for normal mitotic spindle assembly and microtubule attachment to kinetochores via its role in deubiquitinating NUMA1. Plays a role in interferon signaling via its role in the deubiquitination of the interferon receptor IFNAR1; deubiquitination increases IFNAR1 activity by enhancing its stability and cell surface expression. Down-regulates the response to bacterial lipopolysaccharide (LPS) via its role in IFNAR1 deubiquitination. This Homo sapiens (Human) protein is BRISC and BRCA1-A complex member 1 (BABAM1).